Here is a 408-residue protein sequence, read N- to C-terminus: Chaperone protein dnaJ 1, mitochondrial (408 aa).

The transit peptide at 1–26 (MRRFNWVLRHVQARRTFDSAIGLRQG) directs the protein to the mitochondrion. The region spanning 48 to 113 (NYYDVLGVSP…ERREEYDKLQ (66 aa)) is the J domain. The segment at 173-247 (GCTKRLSFDA…CRGSGIVEGT (75 aa)) adopts a CR-type zinc-finger fold. The Zn(2+) site is built by C186, C189, C203, C206, C221, C224, C235, and C238. 4 CXXCXGXG motif repeats span residues 186–193 (CDSCDGLG), 203–210 (CPTCRGVG), 221–228 (CQTCKGTG), and 235–242 (CMSCRGSG).

This sequence belongs to the DnaJ family. B/II subfamily. In terms of assembly, homodimer. The cofactor is Zn(2+). As to expression, ubiquitous.

The protein resides in the mitochondrion. In terms of biological role, plays a continuous role in plant development probably in the structural organization of compartments. The polypeptide is Chaperone protein dnaJ 1, mitochondrial (ATJ1) (Arabidopsis thaliana (Mouse-ear cress)).